The chain runs to 429 residues: Alpha-galactosidase A (429 aa).

The first 31 residues, 1–31 (MQLRNPELHLGCALALRFLALVSWDIPGARA), serve as a signal peptide directing secretion. Disulfide bonds link Cys-52–Cys-94 and Cys-56–Cys-63. Asn-139 carries N-linked (GlcNAc...) asparagine glycosylation. Cysteines 142 and 172 form a disulfide. The active-site Nucleophile is the Asp-170. An N-linked (GlcNAc...) asparagine glycan is attached at Asn-192. A disulfide bridge links Cys-202 with Cys-223. 203 to 207 (EWPLY) provides a ligand contact to substrate. Residue Asn-215 is glycosylated (N-linked (GlcNAc...) asparagine). Residue Asp-231 is the Proton donor of the active site. Cys-378 and Cys-382 are disulfide-bonded.

This sequence belongs to the glycosyl hydrolase 27 family. As to quaternary structure, homodimer.

Its subcellular location is the lysosome. It carries out the reaction Hydrolysis of terminal, non-reducing alpha-D-galactose residues in alpha-D-galactosides, including galactose oligosaccharides, galactomannans and galactolipids.. The enzyme catalyses a globoside Gb3Cer (d18:1(4E)) + H2O = a beta-D-Gal-(1-&gt;4)-beta-D-Glc-(1&lt;-&gt;1)-Cer(d18:1(4E)) + D-galactose. It catalyses the reaction a globoside Gb3Cer + H2O = a beta-D-galactosyl-(1-&gt;4)-beta-D-glucosyl-(1&lt;-&gt;1)-ceramide + D-galactose. Its activity is regulated as follows. Galactosylgalactosylglucosylceramidase activity is stimulated by saposin B and ammonium chloride. Catalyzes the hydrolysis of glycosphingolipids and participates in their degradation in the lysosome. The protein is Alpha-galactosidase A of Homo sapiens (Human).